The primary structure comprises 324 residues: NAC domain-containing protein 30 (324 aa).

The region spanning 9-158 (MPPGFRFHPT…GWVVCRAFRK (150 aa)) is the NAC domain. A DNA-binding region spans residues 109–164 (IGMRKTLVYYKGRAPNGRKSDWIMHEYRLQNSELAPVQEEGWVVCRAFRKPIPNQR). Over residues 232 to 244 (LPQLDSPSLSPSL) the composition is skewed to low complexity. The tract at residues 232-259 (LPQLDSPSLSPSLGTNKDQNESFEQEEE) is disordered.

Belongs to the plant vascular related NAC-domain protein family. As to quaternary structure, forms homodimer and heterodimers with other VND proteins (e.g. NAC037/VND1, NAC076/VND2 and NAC105/VND3) via their N-termini. Interacts with NAC083/VNI2. In terms of tissue distribution, expressed in developing protoxylems in roots and shoots. Detected in root protoxylem poles and in vessels of protoxylems, outermost metaxylems, inner metaxylems, shoots and hypocotyls. Expressed in roots, hypocotyls, cotyledons and leaves. Accumulates in the xylem but not in interfascicular fibers or pith cells in inflorescence stems. Present in developing vessels of the secondary xylem in roots undergoing secondary growth.

Its subcellular location is the nucleus. In terms of biological role, transcription activator that binds to the secondary wall NAC binding element (SNBE), 5'-(T/A)NN(C/T)(T/C/G)TNNNNNNNA(A/C)GN(A/C/T)(A/T)-3', in the promoter of target genes (e.g. genes involved in secondary wall biosynthesis, cell wall modification such as xylan accumulation, and programmed cell death). Involved in xylem formation in roots and shoots, especially regulating protoxylem vessel differentiation by promoting immature xylem vessel-specific genes expression. Can activate the expression of several genes including XCP1, MYB46, NAC010/SND3, MYB103, MYB58, MYB63, MYB83, KNAT7, ASL19 and ASL20. Required for the soilborne fungal pathogen Verticillium longisporum-induced transdifferentiation of chloroplast-containing bundle sheath cells to functional xylem elements leading to stunted growth, vein clearing, and leaf chloroses, as well as xylem hyperplasia within the vasculature of leaves, hypocotyls, and roots due to reinitiation of cambial activity and transdifferentiation of xylem parenchyma cells. This developmental reprogramming also mediates an increased drought stress tolerance. This is NAC domain-containing protein 30 from Arabidopsis thaliana (Mouse-ear cress).